We begin with the raw amino-acid sequence, 175 residues long: Adenine phosphoribosyltransferase (175 aa).

Belongs to the purine/pyrimidine phosphoribosyltransferase family. Homodimer.

The protein resides in the cytoplasm. It carries out the reaction AMP + diphosphate = 5-phospho-alpha-D-ribose 1-diphosphate + adenine. The protein operates within purine metabolism; AMP biosynthesis via salvage pathway; AMP from adenine: step 1/1. Catalyzes a salvage reaction resulting in the formation of AMP, that is energically less costly than de novo synthesis. In Pelagibacter ubique (strain HTCC1062), this protein is Adenine phosphoribosyltransferase.